The following is a 271-amino-acid chain: 3-methyl-2-oxobutanoate hydroxymethyltransferase (271 aa).

Residues Asp44 and Asp83 each contribute to the Mg(2+) site. 3-methyl-2-oxobutanoate is bound by residues 44 to 45 (DS), Asp83, and Lys112. A Mg(2+)-binding site is contributed by Glu114. The active-site Proton acceptor is the Glu181.

The protein belongs to the PanB family. As to quaternary structure, homodecamer; pentamer of dimers. Mg(2+) is required as a cofactor.

The protein resides in the cytoplasm. It catalyses the reaction 3-methyl-2-oxobutanoate + (6R)-5,10-methylene-5,6,7,8-tetrahydrofolate + H2O = 2-dehydropantoate + (6S)-5,6,7,8-tetrahydrofolate. Its pathway is cofactor biosynthesis; coenzyme A biosynthesis. Its function is as follows. Catalyzes the reversible reaction in which hydroxymethyl group from 5,10-methylenetetrahydrofolate is transferred onto alpha-ketoisovalerate to form ketopantoate. The sequence is that of 3-methyl-2-oxobutanoate hydroxymethyltransferase from Staphylothermus marinus (strain ATCC 43588 / DSM 3639 / JCM 9404 / F1).